A 265-amino-acid chain; its full sequence is O-methyltransferase NEC2 (265 aa).

It belongs to the methyltransferase superfamily.

The enzyme catalyses desmethylnectriapyrone + S-adenosyl-L-methionine = nectriapyrone + S-adenosyl-L-homocysteine + H(+). Its function is as follows. O-methyltransferase; part of the gene cluster that mediates the biosynthesis of nectriapyrone and its analogs phomopyrone A, acropyrone and zaepyrone. The nectriapyrone biosynthetic gene cluster consists of two genes, the highly reducing polyketide synthase NEC1 that produces a demethylated analog of nectriapyrone from one unit of acetyl-CoA and one unit of malonyl-CoA; and the O-methyltransferase NEC2 that further methylates the NEC1 product to yield nectriapyrone. Nectriapyrone is further hydrolyzed to nectriapyrone D, also known as gulypyrone B, by an unidentified hydrolase localized outside the nectriapyrone cluster. This chain is O-methyltransferase NEC2, found in Pyricularia oryzae (strain 70-15 / ATCC MYA-4617 / FGSC 8958) (Rice blast fungus).